The sequence spans 92 residues: RQC P-site tRNA stabilizing factor (92 aa).

The region spanning 5–65 (MRLDKYLKVS…GPKIVTAKIE (61 aa)) is the S4 RNA-binding domain.

The protein belongs to the RqcP family. Associates with stalled 50S ribosomal subunits. Binds to RqcH, 23S rRNA and the P-site tRNA. Does not require RqcH for association with 50S subunits.

Its function is as follows. Key component of the ribosome quality control system (RQC), a ribosome-associated complex that mediates the extraction of incompletely synthesized nascent chains from stalled ribosomes and their subsequent degradation. RqcH recruits Ala-charged tRNA, and with RqcP directs the elongation of stalled nascent chains on 50S ribosomal subunits, leading to non-templated C-terminal alanine extensions (Ala tail). The Ala tail promotes nascent chain degradation. RqcP is associated with the translocation-like movement of the peptidyl-tRNA from the A-site into the P-site. The chain is RQC P-site tRNA stabilizing factor from Listeria monocytogenes serovar 1/2a (strain ATCC BAA-679 / EGD-e).